Consider the following 275-residue polypeptide: 3-methyl-2-oxobutanoate hydroxymethyltransferase (275 aa).

Mg(2+) contacts are provided by aspartate 49 and aspartate 88. 3-methyl-2-oxobutanoate-binding positions include 49-50 (DS), aspartate 88, and lysine 118. Glutamate 120 lines the Mg(2+) pocket. The active-site Proton acceptor is glutamate 187.

Belongs to the PanB family. As to quaternary structure, homodecamer; pentamer of dimers. It depends on Mg(2+) as a cofactor.

Its subcellular location is the cytoplasm. The catalysed reaction is 3-methyl-2-oxobutanoate + (6R)-5,10-methylene-5,6,7,8-tetrahydrofolate + H2O = 2-dehydropantoate + (6S)-5,6,7,8-tetrahydrofolate. Its pathway is cofactor biosynthesis; (R)-pantothenate biosynthesis; (R)-pantoate from 3-methyl-2-oxobutanoate: step 1/2. Functionally, catalyzes the reversible reaction in which hydroxymethyl group from 5,10-methylenetetrahydrofolate is transferred onto alpha-ketoisovalerate to form ketopantoate. The sequence is that of 3-methyl-2-oxobutanoate hydroxymethyltransferase from Hyphomonas neptunium (strain ATCC 15444).